The following is a 239-amino-acid chain: Sugar fermentation stimulation protein homolog (239 aa).

Belongs to the SfsA family.

The protein is Sugar fermentation stimulation protein homolog of Cyanothece sp. (strain PCC 7425 / ATCC 29141).